Consider the following 314-residue polypeptide: Acetyl-coenzyme A carboxylase carboxyl transferase subunit alpha (314 aa).

In terms of domain architecture, CoA carboxyltransferase C-terminal spans 32–289 (EIDMLEASLK…KKMFLKHLNE (258 aa)).

Belongs to the AccA family. Acetyl-CoA carboxylase is a heterohexamer composed of biotin carboxyl carrier protein (AccB), biotin carboxylase (AccC) and two subunits each of ACCase subunit alpha (AccA) and ACCase subunit beta (AccD).

It is found in the cytoplasm. It carries out the reaction N(6)-carboxybiotinyl-L-lysyl-[protein] + acetyl-CoA = N(6)-biotinyl-L-lysyl-[protein] + malonyl-CoA. The protein operates within lipid metabolism; malonyl-CoA biosynthesis; malonyl-CoA from acetyl-CoA: step 1/1. In terms of biological role, component of the acetyl coenzyme A carboxylase (ACC) complex. First, biotin carboxylase catalyzes the carboxylation of biotin on its carrier protein (BCCP) and then the CO(2) group is transferred by the carboxyltransferase to acetyl-CoA to form malonyl-CoA. The protein is Acetyl-coenzyme A carboxylase carboxyl transferase subunit alpha of Staphylococcus epidermidis (strain ATCC 35984 / DSM 28319 / BCRC 17069 / CCUG 31568 / BM 3577 / RP62A).